The chain runs to 204 residues: MAGRRSRNNDITVDILLRAYSAGLFPMADSADDPELFWVEPEIRGIIPLDDFHVSKSLAKAMRKKPFAIRFNTAFEDVMAGCAAEAADRPSTWINATIRRLYTELHQIGHAHSVEAWEGDELVGGLYGVSLGAAFFGESMFSRRTNASKICLVHLVERLNAKGFVLLDTQFTTEHLKTFGAIDVPKLDYARMLDLAVNRPSLQF.

This sequence belongs to the L/F-transferase family.

It is found in the cytoplasm. The enzyme catalyses N-terminal L-lysyl-[protein] + L-leucyl-tRNA(Leu) = N-terminal L-leucyl-L-lysyl-[protein] + tRNA(Leu) + H(+). The catalysed reaction is N-terminal L-arginyl-[protein] + L-leucyl-tRNA(Leu) = N-terminal L-leucyl-L-arginyl-[protein] + tRNA(Leu) + H(+). It carries out the reaction L-phenylalanyl-tRNA(Phe) + an N-terminal L-alpha-aminoacyl-[protein] = an N-terminal L-phenylalanyl-L-alpha-aminoacyl-[protein] + tRNA(Phe). Functionally, functions in the N-end rule pathway of protein degradation where it conjugates Leu, Phe and, less efficiently, Met from aminoacyl-tRNAs to the N-termini of proteins containing an N-terminal arginine or lysine. The polypeptide is Leucyl/phenylalanyl-tRNA--protein transferase (Agrobacterium fabrum (strain C58 / ATCC 33970) (Agrobacterium tumefaciens (strain C58))).